Consider the following 144-residue polypeptide: ATP synthase subunit 9, mitochondrial (144 aa).

The transit peptide at 1 to 63 (MASTRVLASR…ATRQITQKRA (63 aa)) directs the protein to the mitochondrion. 2 consecutive transmembrane segments (helical) span residues 83–103 (TAAIGLTGAGIGIGLVFAALL) and 120–140 (AILGFAFVEAIGLFDLMVALM).

Belongs to the ATPase C chain family. F-type ATPases have 2 components, CF(1) - the catalytic core - and CF(0) - the membrane proton channel. CF(1) has five subunits: alpha(3), beta(3), gamma(1), delta(1), epsilon(1). CF(0) has three main subunits: a, b and c.

Its subcellular location is the mitochondrion membrane. Functionally, mitochondrial membrane ATP synthase (F(1)F(0) ATP synthase or Complex V) produces ATP from ADP in the presence of a proton gradient across the membrane which is generated by electron transport complexes of the respiratory chain. F-type ATPases consist of two structural domains, F(1) - containing the extramembraneous catalytic core and F(0) - containing the membrane proton channel, linked together by a central stalk and a peripheral stalk. During catalysis, ATP synthesis in the catalytic domain of F(1) is coupled via a rotary mechanism of the central stalk subunits to proton translocation. Part of the complex F(0) domain. A homomeric c-ring of probably 10 subunits is part of the complex rotary element. This Podospora anserina (Pleurage anserina) protein is ATP synthase subunit 9, mitochondrial (ATP9).